The primary structure comprises 247 residues: ABC-type transporter ATP-binding protein EcsA (247 aa).

The ABC transporter domain maps to Leu4 to Asp234. ATP is bound at residue Gly36–Ser43.

This sequence belongs to the ABC transporter superfamily.

In terms of biological role, has a role in exoprotein production, sporulation and competence. The polypeptide is ABC-type transporter ATP-binding protein EcsA (ecsA) (Bacillus subtilis (strain 168)).